The following is a 440-amino-acid chain: Transposon TyH3 Gag polyprotein (440 aa).

Polar residues-rich tracts occupy residues Met1 to Ser23, Thr48 to Ser60, and Gln127 to Phe152. Disordered stretches follow at residues Met1 to Gln93, Pro126 to Pro173, and Gly352 to Tyr440. The segment covering Thr153–Thr165 has biased composition (low complexity). Residues Asn299 to His401 are RNA-binding. Low complexity predominate over residues Asn402–Ser418. Ser416 is modified (phosphoserine). The span at Lys419–Asn428 shows a compositional bias: polar residues. Over residues Asn429 to Tyr440 the composition is skewed to basic and acidic residues.

As to quaternary structure, homotrimer.

It localises to the cytoplasm. Its function is as follows. Capsid protein (CA) is the structural component of the virus-like particle (VLP), forming the shell that encapsulates the retrotransposons dimeric RNA genome. The particles are assembled from trimer-clustered units and there are holes in the capsid shells that allow for the diffusion of macromolecules. CA also has nucleocapsid-like chaperone activity, promoting primer tRNA(i)-Met annealing to the multipartite primer-binding site (PBS), dimerization of Ty1 RNA and initiation of reverse transcription. The polypeptide is Transposon TyH3 Gag polyprotein (TY1A) (Saccharomyces cerevisiae (Baker's yeast)).